The primary structure comprises 421 residues: Odorant receptor 67b (421 aa).

Residues 1-48 lie on the Cytoplasmic side of the membrane; that stretch reads MQDQLDHELERIDKLPKLGLLWVEYSAYALGVNIAPRKRSSKYCRLTR. Residues 49–69 traverse the membrane as a helical segment; the sequence is ILVLIVNLSIIYSLVAFIMEN. Over 70–71 the chain is Extracellular; the sequence is YM. Residues 72-92 traverse the membrane as a helical segment; the sequence is ISFETYVEAVLLTFQLSVGVV. Over 93-151 the chain is Cytoplasmic; that stretch reads KMFHFQNKVESCSQLVFSTETGEVLKSLGLFQLDLPRKKELLSSVSLILLNNWMIIDRQ. The helical transmembrane segment at 152–172 threads the bilayer; that stretch reads VMFFFKIVCMPVLYYCVRPYF. Residues 173 to 217 are Extracellular-facing; the sequence is QYIFDCYIKDKDTCEMTLTYPAIVPYLQLGNYEFPSYVIRFFLLQ. A helical membrane pass occupies residues 218–238; sequence SGPLWCFFAVFGFNSLFVVLT. Residues 239–289 lie on the Cytoplasmic side of the membrane; it reads RYESGLIKVLRFLVQNSTSDILVPKDQRVKYLQCCVRLFARISSHHNQIEN. The chain crosses the membrane as a helical span at residues 290–310; the sequence is LFKYIILVQCSVSSILICMLL. At 311–315 the chain is on the extracellular side; it reads YKIST. Residues 316-336 form a helical membrane-spanning segment; sequence VLEVGWVWMGMIMVYFVTIAL. Topologically, residues 337–384 are cytoplasmic; sequence EITLYNVSAQKVESQSELLFHDWYNCSWYNESREFKFMIKMMLLFSRR. The chain crosses the membrane as a helical span at residues 385 to 405; the sequence is TFVLSVGGFTSLSHKFLVQVF. Residues 406-421 lie on the Extracellular side of the membrane; sequence RLSANFFLLLRNMNNK.

It belongs to the insect chemoreceptor superfamily. Heteromeric odorant receptor channel (TC 1.A.69) family. Or63a subfamily. Interacts with Orco. Complexes exist early in the endomembrane system in olfactory sensory neurons (OSNs), coupling these complexes to the conserved ciliary trafficking pathway.

Its subcellular location is the cell membrane. In terms of biological role, odorant receptor which mediates acceptance or avoidance behavior, depending on its substrates. The odorant receptor repertoire encodes a large collection of odor stimuli that vary widely in identity, intensity, and duration. May form a complex with Orco to form odorant-sensing units, providing sensitive and prolonged odorant signaling and calcium permeability. Involved in the behavioral responses to ethyl acetate, pentyl acetate, methyl caproate, anisole, heptanal, 2-heptanone, r-carvone, nonanoic acid, and pyrazines. The polypeptide is Odorant receptor 67b (Or67b) (Drosophila melanogaster (Fruit fly)).